The primary structure comprises 136 residues: Methylglyoxal synthase (136 aa).

An MGS-like domain is found at 1–136 (MKIALIAHDR…REVVREENEA (136 aa)). Residues H8, K12, 34–37 (TGTT), and 54–55 (SG) contribute to the substrate site. Catalysis depends on D60, which acts as the Proton donor/acceptor. Position 87 (H87) interacts with substrate.

It belongs to the methylglyoxal synthase family.

It catalyses the reaction dihydroxyacetone phosphate = methylglyoxal + phosphate. Functionally, catalyzes the formation of methylglyoxal from dihydroxyacetone phosphate. The protein is Methylglyoxal synthase of Brevibacillus brevis (strain 47 / JCM 6285 / NBRC 100599).